The primary structure comprises 682 residues: Zinc finger protein 16 (682 aa).

Residues Met-1–Glu-10 are compositionally biased toward basic and acidic residues. A disordered region spans residues Met-1–Ala-43. The necessary for transcription activation stretch occupies residues Tyr-62–Ile-210. The C2H2-type 1; degenerate zinc finger occupies Leu-209–His-231. The C2H2-type 2; degenerate zinc-finger motif lies at Phe-237–His-259. A Glycyl lysine isopeptide (Lys-Gly) (interchain with G-Cter in SUMO2) cross-link involves residue Lys-253. 8 consecutive C2H2-type zinc fingers follow at residues Tyr-265 to His-287, Tyr-293 to His-315, Tyr-321 to His-343, Tyr-349 to His-371, Phe-377 to His-399, Tyr-405 to His-427, Tyr-433 to His-455, and His-461 to His-483. Required for nuclear localization stretches follow at residues Ser-268–Arg-393 and Arg-341–Gly-373. Positions Ser-473–Ala-503 are required for nuclear localization. An N6-acetyllysine modification is found at Lys-487. 7 consecutive C2H2-type zinc fingers follow at residues Tyr-489–His-511, Tyr-517–His-539, Tyr-545–His-567, His-573–His-595, Tyr-601–His-623, Tyr-629–His-651, and Tyr-657–His-679.

It belongs to the krueppel C2H2-type zinc-finger protein family. As to quaternary structure, interacts with INCA1; the interaction inhibits INCA1 activity and induces the cell cycle process. As to expression, ubiquitous.

It is found in the nucleus. In terms of biological role, acts as a transcriptional activator. Promotes cell proliferation by facilitating the cell cycle phase transition from the S to G2/M phase. Involved in both the hemin- and phorbol myristate acetate (PMA)-induced erythroid and megakaryocytic differentiation, respectively. Also plays a role as an inhibitor of cell apoptosis. The polypeptide is Zinc finger protein 16 (ZNF16) (Homo sapiens (Human)).